The sequence spans 224 residues: MSLKLLPEESRPREKLLTRGAKALSDAELLAIFLRTGIKGMNAVELATHLLAEFGSLRALFAADQTLFCLHKGLGPAKYAQLQAIIEMSQRHLEETLKEGDVLTSPQHTRHYLSQLLRDRQREVFYVLFLDNQHRVIAGEVLFEGTINSAAVYPREIVKRSLEFNAVALILAHNHPSGVAEPSQSDLRITRTISDALALVDIRVLDHFIVGDGEIVSFSEQGWL.

Positions Val102 to Leu224 constitute an MPN domain. The Zn(2+) site is built by His173, His175, and Asp186. Positions His173–Asp186 match the JAMM motif motif.

Belongs to the UPF0758 family.

This Photobacterium profundum (strain SS9) protein is UPF0758 protein PBPRA0202.